We begin with the raw amino-acid sequence, 166 residues long: HTH-type transcriptional regulator PrsX (166 aa).

An HTH marR-type domain is found at 25 to 159; that stretch reads EHLLMQLCIR…FEVINKKLLA (135 aa).

The protein resides in the cytoplasm. This chain is HTH-type transcriptional regulator PrsX (prsX), found in Escherichia coli O6:H1 (strain CFT073 / ATCC 700928 / UPEC).